Consider the following 135-residue polypeptide: Holo-[acyl-carrier-protein] synthase (135 aa).

2 residues coordinate Mg(2+): D9 and E63.

This sequence belongs to the P-Pant transferase superfamily. AcpS family. It depends on Mg(2+) as a cofactor.

The protein resides in the cytoplasm. The enzyme catalyses apo-[ACP] + CoA = holo-[ACP] + adenosine 3',5'-bisphosphate + H(+). Its function is as follows. Transfers the 4'-phosphopantetheine moiety from coenzyme A to a Ser of acyl-carrier-protein. This is Holo-[acyl-carrier-protein] synthase from Paraburkholderia phymatum (strain DSM 17167 / CIP 108236 / LMG 21445 / STM815) (Burkholderia phymatum).